The sequence spans 273 residues: Undecaprenyl-diphosphatase (273 aa).

7 helical membrane-spanning segments follow: residues 6–26, 45–65, 90–110, 116–136, 190–210, 222–242, and 252–272; these read SLLI…LPVS, AKTF…VMFW, LTLI…LVFH, LFNP…LIAA, YAAS…ATVL, ADIP…LIAI, and ISFI…YVVF.

The protein belongs to the UppP family.

The protein localises to the cell inner membrane. It carries out the reaction di-trans,octa-cis-undecaprenyl diphosphate + H2O = di-trans,octa-cis-undecaprenyl phosphate + phosphate + H(+). Catalyzes the dephosphorylation of undecaprenyl diphosphate (UPP). Confers resistance to bacitracin. The chain is Undecaprenyl-diphosphatase from Salmonella paratyphi C (strain RKS4594).